The following is a 309-amino-acid chain: Homoserine kinase (309 aa).

Pro-91 to Cys-101 serves as a coordination point for ATP.

Belongs to the GHMP kinase family. Homoserine kinase subfamily.

Its subcellular location is the cytoplasm. The catalysed reaction is L-homoserine + ATP = O-phospho-L-homoserine + ADP + H(+). It functions in the pathway amino-acid biosynthesis; L-threonine biosynthesis; L-threonine from L-aspartate: step 4/5. In terms of biological role, catalyzes the ATP-dependent phosphorylation of L-homoserine to L-homoserine phosphate. This chain is Homoserine kinase, found in Buchnera aphidicola subsp. Acyrthosiphon pisum (strain 5A).